A 194-amino-acid chain; its full sequence is Potassium-transporting ATPase KdpC subunit (194 aa).

The chain crosses the membrane as a helical span at residues 12 to 34 (LFLLLLTGGVYPLLTTALGQWWF).

This sequence belongs to the KdpC family. The system is composed of three essential subunits: KdpA, KdpB and KdpC.

It is found in the cell inner membrane. Functionally, part of the high-affinity ATP-driven potassium transport (or Kdp) system, which catalyzes the hydrolysis of ATP coupled with the electrogenic transport of potassium into the cytoplasm. This subunit acts as a catalytic chaperone that increases the ATP-binding affinity of the ATP-hydrolyzing subunit KdpB by the formation of a transient KdpB/KdpC/ATP ternary complex. This chain is Potassium-transporting ATPase KdpC subunit, found in Salmonella agona (strain SL483).